A 297-amino-acid chain; its full sequence is Sirohydrochlorin cobaltochelatase CbiKP (297 aa).

The first 28 residues, 1 to 28, serve as a signal peptide directing secretion; the sequence is MSRHPMVTRLLCLVFSCLIILACSPAFA. His-124 is a heme binding site. His-182 (proton acceptor) is an active-site residue. Co(2+) contacts are provided by His-182, Glu-212, and His-244.

The protein belongs to the CbiK family. As to quaternary structure, homotetramer; dimer of dimers.

Its subcellular location is the periplasm. It carries out the reaction Co-sirohydrochlorin + 2 H(+) = sirohydrochlorin + Co(2+). The catalysed reaction is siroheme + 2 H(+) = sirohydrochlorin + Fe(2+). Catalyzes the insertion of Co(2+) into sirohydrochlorin. To a lesser extent, is also able to insert Fe(2+) into sirohydrochlorin, yielding siroheme. Its periplasmic location means that it cannot participate in cobalamin biosynthesis and its genomic environment suggests it is likely to be associated with a heme or metal transport system. The polypeptide is Sirohydrochlorin cobaltochelatase CbiKP (cbiKp) (Nitratidesulfovibrio vulgaris (strain ATCC 29579 / DSM 644 / CCUG 34227 / NCIMB 8303 / VKM B-1760 / Hildenborough) (Desulfovibrio vulgaris)).